Here is a 120-residue protein sequence, read N- to C-terminus: Large ribosomal subunit protein uL24 (120 aa).

Belongs to the universal ribosomal protein uL24 family. As to quaternary structure, part of the 50S ribosomal subunit.

Functionally, one of two assembly initiator proteins, it binds directly to the 5'-end of the 23S rRNA, where it nucleates assembly of the 50S subunit. Located at the polypeptide exit tunnel on the outside of the subunit. The polypeptide is Large ribosomal subunit protein uL24 (Archaeoglobus fulgidus (strain ATCC 49558 / DSM 4304 / JCM 9628 / NBRC 100126 / VC-16)).